We begin with the raw amino-acid sequence, 608 residues long: Chaperone protein HtpG (608 aa).

An a; substrate-binding region spans residues 1 to 332; that stretch reads MQFQTEVNQL…VEDLPLNVSR (332 aa). The segment at 333-536 is b; that stretch reads EILQENQILK…KNKPDFAMQQ (204 aa). The interval 537–608 is c; it reads LLKQMGQEQN…LTKIINKAFS (72 aa).

The protein belongs to the heat shock protein 90 family. Homodimer.

The protein localises to the cytoplasm. Functionally, molecular chaperone. Has ATPase activity. This chain is Chaperone protein HtpG, found in Campylobacter jejuni (strain RM1221).